The primary structure comprises 156 residues: Arginine repressor (156 aa).

It belongs to the ArgR family.

Its subcellular location is the cytoplasm. It functions in the pathway amino-acid biosynthesis; L-arginine biosynthesis [regulation]. Regulates arginine biosynthesis genes. This is Arginine repressor from Tolumonas auensis (strain DSM 9187 / NBRC 110442 / TA 4).